Consider the following 208-residue polypeptide: Sexual inducer glycoprotein (208 aa).

The N-terminal stretch at 1–11 (MAVVVVNSATA) is a signal peptide. 6 N-linked (GlcNAc...) asparagine glycosylation sites follow: asparagine 89, asparagine 119, asparagine 131, asparagine 139, asparagine 146, and asparagine 188.

Its function is as follows. The sexual inducer is a glycoprotein synthesized and released by sexual males at about the time they release sperm packets. It is one of the most potent biological effector molecules known: it exhibits full effectiveness in converting asexually growing males and females to the sexual pathway at about 10(-7) m. This chain is Sexual inducer glycoprotein, found in Volvox carteri (Green alga).